We begin with the raw amino-acid sequence, 525 residues long: MTVNYNLDVSSASIFSFLRLQLRWKGSIWKYLLKELFMFIIAFITVSSVYRSNLIIGEKTRKIWDNFAALFDQNMDFIPLTFMLGFFVTIIVRRWNDIFANLGWVENTAITVANYIRGTDDRTRMIRRNVIRYMVLAQVLVFRDCSIQVRKRFPTMESIVSAGFMLEHEKEALDNVQCGKLQKYFVPIQWSTGLLVDARAEGKIAADLLMNEIGKHIIEFRKMLALLSNYDWVPIPLAYPQVVFLAVRSYFFMALIARQSVLLDGKEPEQPSILYPTVPFVMSILQFIFVVGWMKVAESMINPLGEDDDDFECNYLLDRNLMIGLCIVDDNYNRTPSVEKDAFWCADVEPLYSVETAMIPKNPQIGSAANYDVKVDEEEVMMMPHMDDVDLFDFESTNNLIPRKTFSVISIQRPFGSRASLASRKRSMMFDQLRGRIAKKQHRSNMFQNSVSQASLHYFESQAPSEINLSTLEMTAPKRKSSTGKLGSMNVAEEQHKLSAEVLPIVIEEDEERSKMLEKDKNKNA.

4 helical membrane-spanning segments follow: residues 36-56 (LFMF…NLII), 71-91 (FDQN…VTII), 237-257 (LAYP…ALIA), and 273-293 (ILYP…VVGW).

Belongs to the anion channel-forming bestrophin (TC 1.A.46) family. Calcium-sensitive chloride channel subfamily. In terms of assembly, forms oligomers.

The protein localises to the cell membrane. Forms chloride channels. In Caenorhabditis elegans, this protein is Bestrophin homolog 15 (best-15).